Here is a 479-residue protein sequence, read N- to C-terminus: UDP-glycosyltransferase 85A5 (479 aa).

UDP-alpha-D-glucose-binding positions include serine 301, 358–360 (CPQ), 375–383 (HSGWNSTLE), and 397–400 (FAEQ).

Belongs to the UDP-glycosyltransferase family. Expressed in roots, shoots and leaves.

In Arabidopsis thaliana (Mouse-ear cress), this protein is UDP-glycosyltransferase 85A5 (UGT85A5).